A 202-amino-acid polypeptide reads, in one-letter code: Ribosome maturation factor RimP (202 aa).

This sequence belongs to the RimP family.

It localises to the cytoplasm. Functionally, required for maturation of 30S ribosomal subunits. In Polaromonas naphthalenivorans (strain CJ2), this protein is Ribosome maturation factor RimP.